The chain runs to 508 residues: Photosystem II CP47 reaction center protein (508 aa).

6 consecutive transmembrane segments (helical) span residues 21–36, 101–115, 140–156, 203–218, 237–252, and 457–472; these read AVHI…WAGS, ILFS…IWHW, GIHL…FGAF, IAAG…FHLS, VLSS…AFVV, and SFAL…HGAR.

This sequence belongs to the PsbB/PsbC family. PsbB subfamily. In terms of assembly, PSII is composed of 1 copy each of membrane proteins PsbA, PsbB, PsbC, PsbD, PsbE, PsbF, PsbH, PsbI, PsbJ, PsbK, PsbL, PsbM, PsbT, PsbX, PsbY, PsbZ, Psb30/Ycf12, at least 3 peripheral proteins of the oxygen-evolving complex and a large number of cofactors. It forms dimeric complexes. Binds multiple chlorophylls. PSII binds additional chlorophylls, carotenoids and specific lipids. serves as cofactor.

The protein resides in the plastid. The protein localises to the chloroplast thylakoid membrane. In terms of biological role, one of the components of the core complex of photosystem II (PSII). It binds chlorophyll and helps catalyze the primary light-induced photochemical processes of PSII. PSII is a light-driven water:plastoquinone oxidoreductase, using light energy to abstract electrons from H(2)O, generating O(2) and a proton gradient subsequently used for ATP formation. The protein is Photosystem II CP47 reaction center protein of Oenothera argillicola (Appalachian evening primrose).